Reading from the N-terminus, the 191-residue chain is Potassium-transporting ATPase KdpC subunit (191 aa).

A helical membrane pass occupies residues 11–31 (LFVLLTAVTGVVYPLAVTGIA).

The protein belongs to the KdpC family. The system is composed of three essential subunits: KdpA, KdpB and KdpC.

It is found in the cell inner membrane. Part of the high-affinity ATP-driven potassium transport (or Kdp) system, which catalyzes the hydrolysis of ATP coupled with the electrogenic transport of potassium into the cytoplasm. This subunit acts as a catalytic chaperone that increases the ATP-binding affinity of the ATP-hydrolyzing subunit KdpB by the formation of a transient KdpB/KdpC/ATP ternary complex. The sequence is that of Potassium-transporting ATPase KdpC subunit from Dechloromonas aromatica (strain RCB).